Here is a 756-residue protein sequence, read N- to C-terminus: Nucleomorphin (756 aa).

Over residues 1-10 (MDLDYSSDNS) the composition is skewed to polar residues. A disordered region spans residues 1–113 (MDLDYSSDNS…SQSNEDLSSS (113 aa)). 2 stretches are compositionally biased toward low complexity: residues 16-66 (NQNN…RPSS) and 75-94 (NNNNNNNNNNNNNNNNNNNN). Residues 95-113 (GATISHPPTSQSNEDLSSS) are compositionally biased toward polar residues. In terms of domain architecture, BRCT spans 124-216 (LNSNIFENLG…ELLGVENYLV (93 aa)). Disordered regions lie at residues 229–251 (NSSQDLIEKPNEEEPQNGTINEQ), 272–298 (PSSLEKQEPKETELQTQQQPQTELKSE), 359–403 (KIDL…NKNN), and 422–463 (TSST…LLNL). 3 stretches are compositionally biased toward low complexity: residues 285 to 298 (LQTQQQPQTELKSE), 364 to 401 (NNNNNNNNNNNNNNNNNNNNNNNNNNNNNNSSSNNKNK), and 422 to 432 (TSSTSSTLSSS). Positions 448 to 459 (KSKKKFSQKKNH) are enriched in basic residues. Positions 464–480 (KKSYQDPEIIAHSRPRK) match the Nuclear localization signal motif. The segment at 495 to 512 (ANYISNLDGFKYYARANK) is calmodulin binding. Polar residues predominate over residues 514 to 529 (SLNSNATTSGGNNRSI). A disordered region spans residues 514–587 (SLNSNATTSG…SDEDDFDSDE (74 aa)). A compositionally biased stretch (acidic residues) spans 536–587 (YDDEEEDEEDEDEEDEEEDEEEEEEEEEEEEDYDDEDLNDEESDEDDFDSDE). The interval 537–588 (DDEEEDEEDEDEEDEEEDEEEEEEEEEEEEDYDDEDLNDEESDEDDFDSDED) is DEED region. 2 calmodulin binding regions span residues 589–606 (VSRFIKGKLLQKQQKIYK) and 596–613 (KLLQKQQKIYKDLERFEH). 2 disordered regions span residues 613–639 (HSRQQQHHHHQSSQVNSSKPRSRSHSR) and 660–700 (LSPT…RTNI). Residues 668-691 (LSNQFHQDGGNNTTDGNLFNNFST) are compositionally biased toward polar residues.

Interacts with calmodulin and CBPD1 in the presence of Ca(2+).

It is found in the nucleus. The chain is Nucleomorphin (numA) from Dictyostelium discoideum (Social amoeba).